Consider the following 229-residue polypeptide: Enolase-phosphatase E1 (229 aa).

Over residues 208-218 the composition is skewed to polar residues; it reads DTQSTHRQVSS. The interval 208–229 is disordered; it reads DTQSTHRQVSSFDDIHPEQIPT. The segment covering 220 to 229 has biased composition (basic and acidic residues); the sequence is DDIHPEQIPT.

The protein belongs to the HAD-like hydrolase superfamily. MasA/MtnC family. In terms of assembly, monomer. Mg(2+) serves as cofactor.

It carries out the reaction 5-methylsulfanyl-2,3-dioxopentyl phosphate + H2O = 1,2-dihydroxy-5-(methylsulfanyl)pent-1-en-3-one + phosphate. Its pathway is amino-acid biosynthesis; L-methionine biosynthesis via salvage pathway; L-methionine from S-methyl-5-thio-alpha-D-ribose 1-phosphate: step 3/6. The protein operates within amino-acid biosynthesis; L-methionine biosynthesis via salvage pathway; L-methionine from S-methyl-5-thio-alpha-D-ribose 1-phosphate: step 4/6. Bifunctional enzyme that catalyzes the enolization of 2,3-diketo-5-methylthiopentyl-1-phosphate (DK-MTP-1-P) into the intermediate 2-hydroxy-3-keto-5-methylthiopentenyl-1-phosphate (HK-MTPenyl-1-P), which is then dephosphorylated to form the acireductone 1,2-dihydroxy-3-keto-5-methylthiopentene (DHK-MTPene). The protein is Enolase-phosphatase E1 of Cronobacter sakazakii (Enterobacter sakazakii).